We begin with the raw amino-acid sequence, 370 residues long: 4-hydroxy-3-methylbut-2-en-1-yl diphosphate synthase (flavodoxin) (370 aa).

[4Fe-4S] cluster contacts are provided by C268, C271, C303, and E310.

It belongs to the IspG family. The cofactor is [4Fe-4S] cluster.

The enzyme catalyses (2E)-4-hydroxy-3-methylbut-2-enyl diphosphate + oxidized [flavodoxin] + H2O + 2 H(+) = 2-C-methyl-D-erythritol 2,4-cyclic diphosphate + reduced [flavodoxin]. The protein operates within isoprenoid biosynthesis; isopentenyl diphosphate biosynthesis via DXP pathway; isopentenyl diphosphate from 1-deoxy-D-xylulose 5-phosphate: step 5/6. Functionally, converts 2C-methyl-D-erythritol 2,4-cyclodiphosphate (ME-2,4cPP) into 1-hydroxy-2-methyl-2-(E)-butenyl 4-diphosphate. This chain is 4-hydroxy-3-methylbut-2-en-1-yl diphosphate synthase (flavodoxin), found in Bacillus cereus (strain G9842).